Consider the following 61-residue polypeptide: uncharacterized protein (61 aa).

This is an uncharacterized protein from Frog virus 3 (isolate Goorha) (FV-3).